The sequence spans 678 residues: Ribonuclease Z 2, mitochondrial (678 aa).

Residues 1–37 (MKASLLVPRRALLFGQLLPPKYSWYSVKRWQSQLTFR) constitute a mitochondrion transit peptide.

This sequence belongs to the RNase Z family. Requires Zn(2+) as cofactor.

It localises to the mitochondrion. It is found in the cytoplasm. The enzyme catalyses Endonucleolytic cleavage of RNA, removing extra 3' nucleotides from tRNA precursor, generating 3' termini of tRNAs. A 3'-hydroxy group is left at the tRNA terminus and a 5'-phosphoryl group is left at the trailer molecule.. Zinc phosphodiesterase, which displays some tRNA 3'-processing endonuclease activity. May be involved in tRNA maturation, by removing a 3'-trailer from precursor tRNA. The chain is Ribonuclease Z 2, mitochondrial (trz2) from Schizosaccharomyces pombe (strain 972 / ATCC 24843) (Fission yeast).